The chain runs to 477 residues: tRNA-2-methylthio-N(6)-dimethylallyladenosine synthase (477 aa).

One can recognise an MTTase N-terminal domain in the interval 3–120 (KKLFIKTWGC…LPEMINQIKG (118 aa)). Cys12, Cys49, Cys83, Cys157, Cys161, and Cys164 together coordinate [4Fe-4S] cluster. The 233-residue stretch at 143-375 (KAEGPTAFVS…QNRITQQALR (233 aa)) folds into the Radical SAM core domain. A TRAM domain is found at 378 to 441 (RNMIDSEQRV…ANSLRGDVLR (64 aa)).

This sequence belongs to the methylthiotransferase family. MiaB subfamily. As to quaternary structure, monomer. [4Fe-4S] cluster serves as cofactor.

The protein localises to the cytoplasm. It carries out the reaction N(6)-dimethylallyladenosine(37) in tRNA + (sulfur carrier)-SH + AH2 + 2 S-adenosyl-L-methionine = 2-methylsulfanyl-N(6)-dimethylallyladenosine(37) in tRNA + (sulfur carrier)-H + 5'-deoxyadenosine + L-methionine + A + S-adenosyl-L-homocysteine + 2 H(+). Catalyzes the methylthiolation of N6-(dimethylallyl)adenosine (i(6)A), leading to the formation of 2-methylthio-N6-(dimethylallyl)adenosine (ms(2)i(6)A) at position 37 in tRNAs that read codons beginning with uridine. In Pseudoalteromonas atlantica (strain T6c / ATCC BAA-1087), this protein is tRNA-2-methylthio-N(6)-dimethylallyladenosine synthase.